We begin with the raw amino-acid sequence, 261 residues long: Glucosamine-6-phosphate deaminase (261 aa).

Asp-67 (proton acceptor; for enolization step) is an active-site residue. Asp-136 serves as the catalytic For ring-opening step. His-138 functions as the Proton acceptor; for ring-opening step in the catalytic mechanism. The active-site For ring-opening step is Glu-143.

Belongs to the glucosamine/galactosamine-6-phosphate isomerase family. NagB subfamily.

The enzyme catalyses alpha-D-glucosamine 6-phosphate + H2O = beta-D-fructose 6-phosphate + NH4(+). It functions in the pathway amino-sugar metabolism; N-acetylneuraminate degradation; D-fructose 6-phosphate from N-acetylneuraminate: step 5/5. Its function is as follows. Catalyzes the reversible isomerization-deamination of glucosamine 6-phosphate (GlcN6P) to form fructose 6-phosphate (Fru6P) and ammonium ion. The protein is Glucosamine-6-phosphate deaminase of Streptomyces coelicolor (strain ATCC BAA-471 / A3(2) / M145).